The primary structure comprises 515 residues: MSVPTFDDLSFYSNDQELTKSRYLKLVEIFQSNFPNASIDFFARSPGRVNLIGDHIDYNFFPVLPMAISADVIVAVNVNDEPEIVITHTDSKNFAKETIPLTNNNDGFEIDSQHHSWANYFKCALIVANNYLTEQNLKGQLKGMKLTFDGNVPTGGGLSSSAAFCVASTLAILHANGVKDITKADLTRITVVCEHYVGVNTGGMDQCASVYGEPDKALLIQFKPKLIGKPFKFPVENLTFVITNSLQVSNKHETAPIHYNLRVVEMAIAADVLVKKLNLGTLVPQDSNIGTSSLRGVMDAVFNTCKWDGNDIDVGIDQLKKMIAIVETELNNNQEGYTVDQCLTVLDLSLDEFKSKYLQAYPVKFDVLKLYQRAKHVYQESLRVLETLKLLSTTQTSSNSKDDDESFLVKFGELMNQSQSDLDKLNESSNDKLNKICSIALQNGSYGSRITGAGWGGSIVHLTTLDKSKQLIQGLIKNYYQLEFPSIKLDELLNDAIIDSKPSMGSCIVTTKFLQ.

Residues Arg48, Asp54, His55, and Asp57 each coordinate alpha-D-galactose. Residues Gly155, Gly157, Ser159, and Ser160 each coordinate ATP. Asp205 is a binding site for alpha-D-galactose. Asp205 functions as the Proton acceptor in the catalytic mechanism. 3 residues coordinate ATP: Ser249, Asn250, and Lys251. Tyr259 lines the alpha-D-galactose pocket.

This sequence belongs to the GHMP kinase family. GalK subfamily.

The enzyme catalyses alpha-D-galactose + ATP = alpha-D-galactose 1-phosphate + ADP + H(+). The protein operates within carbohydrate metabolism; galactose metabolism. In terms of biological role, galactokinase is a key enzyme in the galactose metabolism where it catalyzes the conversion of alpha-D-galactose to galactose 1-phosphate. Can also induce the transcription of the gal genes in response to the organism being challenged with galactose as the sole source of carbon. In Candida albicans (Yeast), this protein is Galactokinase.